A 99-amino-acid polypeptide reads, in one-letter code: Nucleoid-associated protein LACR_0106 (99 aa).

This sequence belongs to the YbaB/EbfC family. Homodimer.

The protein localises to the cytoplasm. The protein resides in the nucleoid. Its function is as follows. Binds to DNA and alters its conformation. May be involved in regulation of gene expression, nucleoid organization and DNA protection. In Lactococcus lactis subsp. cremoris (strain SK11), this protein is Nucleoid-associated protein LACR_0106.